The sequence spans 161 residues: Pleiotrophin-B (161 aa).

The signal sequence occupies residues M1 to G23. Intrachain disulfides connect C41–C70, C49–C79, C56–C83, C93–C125, and C103–C135. Chondroitin sulfate binding regions lie at residues K86–C93 and K117–C125. A disordered region spans residues G136–D161. The segment at P141–D161 is chondroitin sulfate A binding.

This sequence belongs to the pleiotrophin family. As to expression, expressed in high levels in brain and eye. Lower levels in bone. In the tailbud embryo stage, it is expressed exclusively in the central nervous system, especially in the hind region of the brain.

It is found in the secreted. In terms of biological role, secreted growth factor that mediates its signal through cell-surface proteoglycan and non-proteoglycan receptors. Binds cell-surface proteoglycan receptor via their chondroitin sulfate (CS) groups. Thereby regulates many processes like cell proliferation, cell survival, cell growth, cell differentiation and cell migration. Has antibacterial activity against both Gram-positive and Gram-negative bacteria. This chain is Pleiotrophin-B (ptn-b), found in Xenopus laevis (African clawed frog).